A 240-amino-acid polypeptide reads, in one-letter code: Probable transcriptional regulatory protein MADE_1004275 (240 aa).

The protein belongs to the TACO1 family.

The protein localises to the cytoplasm. The chain is Probable transcriptional regulatory protein MADE_1004275 from Alteromonas mediterranea (strain DSM 17117 / CIP 110805 / LMG 28347 / Deep ecotype).